Reading from the N-terminus, the 348-residue chain is Fructose-1,6-bisphosphatase class 1 (348 aa).

Mg(2+) is bound by residues Glu92, Asp111, Leu113, and Asp114. Substrate is bound by residues 114-117 and Asn204; that span reads DGSS. Glu276 provides a ligand contact to Mg(2+).

The protein belongs to the FBPase class 1 family. Homotetramer. Mg(2+) is required as a cofactor.

It localises to the cytoplasm. It catalyses the reaction beta-D-fructose 1,6-bisphosphate + H2O = beta-D-fructose 6-phosphate + phosphate. It participates in carbohydrate biosynthesis; gluconeogenesis. The chain is Fructose-1,6-bisphosphatase class 1 from Methylorubrum extorquens (strain CM4 / NCIMB 13688) (Methylobacterium extorquens).